We begin with the raw amino-acid sequence, 357 residues long: 3-isopropylmalate dehydrogenase (357 aa).

Positions 97, 107, 135, and 224 each coordinate substrate. Mg(2+) contacts are provided by D224, D248, and D252. 282–294 (GSAPDIAGQDKAN) serves as a coordination point for NAD(+).

Belongs to the isocitrate and isopropylmalate dehydrogenases family. LeuB type 1 subfamily. In terms of assembly, homodimer. Mg(2+) serves as cofactor. Mn(2+) is required as a cofactor.

Its subcellular location is the cytoplasm. The enzyme catalyses (2R,3S)-3-isopropylmalate + NAD(+) = 4-methyl-2-oxopentanoate + CO2 + NADH. Its pathway is amino-acid biosynthesis; L-leucine biosynthesis; L-leucine from 3-methyl-2-oxobutanoate: step 3/4. In terms of biological role, catalyzes the oxidation of 3-carboxy-2-hydroxy-4-methylpentanoate (3-isopropylmalate) to 3-carboxy-4-methyl-2-oxopentanoate. The product decarboxylates to 4-methyl-2 oxopentanoate. The sequence is that of 3-isopropylmalate dehydrogenase from Parasynechococcus marenigrum (strain WH8102).